The following is an 82-amino-acid chain: RNA-binding protein Hfq (82 aa).

The Sm domain occupies 9 to 69; the sequence is DQLLNTARKD…ISTIIPAKII (61 aa).

It belongs to the Hfq family. In terms of assembly, homohexamer.

Its function is as follows. RNA chaperone that binds small regulatory RNA (sRNAs) and mRNAs to facilitate mRNA translational regulation in response to envelope stress, environmental stress and changes in metabolite concentrations. Also binds with high specificity to tRNAs. This chain is RNA-binding protein Hfq, found in Leptospira borgpetersenii serovar Hardjo-bovis (strain L550).